The primary structure comprises 256 residues: Alcohol dehydrogenase (256 aa).

12–35 (FVAGLGGIGLDTSKELVKRDLKNL) is a binding site for NAD(+). Ser140 provides a ligand contact to substrate. The active-site Proton acceptor is Tyr153.

This sequence belongs to the short-chain dehydrogenases/reductases (SDR) family. Homodimer.

It carries out the reaction a primary alcohol + NAD(+) = an aldehyde + NADH + H(+). The catalysed reaction is a secondary alcohol + NAD(+) = a ketone + NADH + H(+). This chain is Alcohol dehydrogenase (Adh), found in Drosophila erecta (Fruit fly).